A 190-amino-acid polypeptide reads, in one-letter code: Putative resolvase R80 (190 aa).

A DNA-binding region (H-T-H motif) is located at residues 11 to 30 (SSVLGVHQRTLYQWDKKGWI). A Resolvase/invertase-type recombinase catalytic domain is found at 61–190 (LSICYVRVSS…RNGSRKYSNK (130 aa)). A coiled-coil region spans residues 67–92 (RVSSNSQKDDLERQIKFMKKKYPNHT). The active-site O-(5'-phospho-DNA)-serine intermediate is Ser-69.

This sequence belongs to the site-specific recombinase resolvase family.

In terms of biological role, resolvase catalyzes the resolution (a site-specific recombination) of the cointegrated replicon to yield the final transposition products. The sequence is that of Putative resolvase R80 from Acanthamoeba polyphaga mimivirus (APMV).